Reading from the N-terminus, the 102-residue chain is Small ribosomal subunit protein uS10 (102 aa).

This sequence belongs to the universal ribosomal protein uS10 family. Part of the 30S ribosomal subunit.

Involved in the binding of tRNA to the ribosomes. The sequence is that of Small ribosomal subunit protein uS10 (rpsJ) from Bacillus subtilis (strain 168).